Here is a 340-residue protein sequence, read N- to C-terminus: 4-amino-5-hydroxymethyl-2-methylpyrimidine phosphate synthase THI13 (340 aa).

Lys62 carries the N6-(pyridoxal phosphate)lysine modification. Residue His66 is part of the active site. 115-118 lines the pyridoxal 5'-phosphate pocket; the sequence is GEFG. Positions 195–199 match the CCCFC; essential for catalytic activity, may be the site of iron coordination motif; it reads CCCFC.

The protein belongs to the NMT1/THI5 family. Homodimer. Fe cation serves as cofactor.

It carries out the reaction N(6)-(pyridoxal phosphate)-L-lysyl-[4-amino-5-hydroxymethyl-2-methylpyrimidine phosphate synthase] + L-histidyl-[4-amino-5-hydroxymethyl-2-methylpyrimidine phosphate synthase] + 2 Fe(3+) + 4 H2O = L-lysyl-[4-amino-5-hydroxymethyl-2-methylpyrimidine phosphate synthase] + (2S)-2-amino-5-hydroxy-4-oxopentanoyl-[4-amino-5-hydroxymethyl-2-methylpyrimidine phosphate synthase] + 4-amino-2-methyl-5-(phosphooxymethyl)pyrimidine + 3-oxopropanoate + 2 Fe(2+) + 2 H(+). It participates in cofactor biosynthesis; thiamine diphosphate biosynthesis. Functionally, responsible for the formation of the pyrimidine heterocycle in the thiamine biosynthesis pathway. Catalyzes the formation of hydroxymethylpyrimidine phosphate (HMP-P) from histidine and pyridoxal phosphate (PLP). The protein uses PLP and the active site histidine to form HMP-P, generating an inactive enzyme. The enzyme can only undergo a single turnover, which suggests it is a suicide enzyme. The polypeptide is 4-amino-5-hydroxymethyl-2-methylpyrimidine phosphate synthase THI13 (Saccharomyces cerevisiae (strain ATCC 204508 / S288c) (Baker's yeast)).